A 3175-amino-acid chain; its full sequence is Replicase polyprotein 1ab (3175 aa).

The C4-type; atypical zinc finger occupies 25–44; that stretch reads CEHGAGLCCEVDGSTLCAEC. In terms of domain architecture, Peptidase C31 spans 66-156; sequence SPVPVGHKFL…PAANSLIVTT (91 aa). Residues 157–260 form the Peptidase C32 domain; sequence DQEQDGFCWL…WSCLPAGNYG (104 aa). Catalysis depends on for Nsp1 papain-like cysteine proteinase activity residues cysteine 164 and histidine 230. The interval 261-339 is OTU-like; it reads GYNPPGDGAC…KQHWRVKRAK (79 aa). Positions 261-360 constitute a Peptidase C33 domain; it reads GYNPPGDGAC…RGICNCQRMS (100 aa). Cysteine 270 acts as the For Nsp2 cysteine proteinase activity in catalysis. Cysteine 319 contacts Zn(2+). Catalysis depends on histidine 332, which acts as the For Nsp2 cysteine proteinase activity. 3 residues coordinate Zn(2+): cysteine 349, cysteine 354, and cysteine 356. The disordered stretch occupies residues 386–451; sequence VVTPEGQPRP…TRLQGASTQE (66 aa). The next 7 membrane-spanning stretches (helical) occupy residues 530-550, 551-571, 625-645, 829-849, 903-923, 935-955, and 977-997; these read AVIA…SFAI, GLIP…SSAN, FDAA…ILYL, LIGG…STFT, YWIA…RLAI, LVLL…SLAG, and LVTM…LMGL. The tract at residues 530 to 645 is HD1; the sequence is AVIACLLPIW…DLCSFAILYL (116 aa). The tract at residues 829–997 is HD2; that stretch reads LIGGWIYGIC…ALAVYSLMGL (169 aa). In terms of domain architecture, Peptidase S32 spans 1065–1268; it reads GLFRSPKARG…MLIDGLSNRE (204 aa). Active-site charge relay system; for 3C-like serine proteinase activity residues include histidine 1103, aspartate 1129, and serine 1184. 4 helical membrane-spanning segments follow: residues 1291–1311, 1333–1353, 1355–1375, and 1385–1405; these read AYLP…KSVG, CLFH…WFYI, AAGT…MLFV, and GWAI…AALG. Residues 1291–1405 are HD3; sequence AYLPYVLGFF…SITMLAAALG (115 aa). A glycan (N-linked (GlcNAc...) asparagine; by host) is linked at asparagine 1501. The segment at 1577–1614 is disordered; that stretch reads NDTPVKPMPSRRRRKGLPKGAQLEWDRHQEEKRNAGDD. Basic and acidic residues predominate over residues 1600–1612; it reads EWDRHQEEKRNAG. Residues 1716–1883 form the NiRAN domain; that stretch reads LANPVEAVNQ…DKVAAAVSGD (168 aa). A RdRp catalytic domain is found at 2116–2251; the sequence is KYCLETDLES…TTPNQHYAAS (136 aa). Residues 2371-2438 enclose the AV ZBD domain; that stretch reads SAVCTVCGAA…SPKQMVPKVP (68 aa). The Zn(2+) site is built by cysteine 2374, cysteine 2377, cysteine 2387, cysteine 2392, cysteine 2395, histidine 2399, histidine 2402, cysteine 2403, cysteine 2412, histidine 2414, cysteine 2423, and cysteine 2426. The 166-residue stretch at 2496–2661 folds into the (+)RNA virus helicase ATP-binding domain; it reads PGSHIAVPLQ…LRHFVSLEPL (166 aa). Residue 2528–2535 coordinates ATP; sequence GPPGSGKT. Positions 2662–2793 constitute a (+)RNA virus helicase C-terminal domain; the sequence is RVCHRFGAAV…PPTACHLGQE (132 aa). Residues 2840-2930 enclose the AV-Nsp11N/CoV-Nsp15M domain; that stretch reads KISCLPRVAQ…LTEWVDGKAR (91 aa). Positions 2932 to 3054 constitute a NendoU domain; sequence LPDSLFSSGR…MVWRNATFYV (123 aa). Residues histidine 2963, histidine 2978, and lysine 3007 contribute to the active site.

The protein belongs to the arteriviridae polyprotein family. Nsp1 interacts with cellular transcription cofactor SND1/p100. In terms of processing, specific enzymatic cleavages in vivo by its own proteases yield mature proteins. There are two alternative pathways for processing. Either nsp4-5 is cleaved, which represents the major pathway or the nsp5-6 and nsp6-7 are processed, which represents the minor pathway. The major pathway occurs when nsp2 acts as a cofactor for nsp4.

It is found in the host nucleus. It localises to the host cytoplasm. The protein resides in the host membrane. Its subcellular location is the host perinuclear region. It carries out the reaction RNA(n) + a ribonucleoside 5'-triphosphate = RNA(n+1) + diphosphate. The enzyme catalyses ATP + H2O = ADP + phosphate + H(+). It catalyses the reaction Thiol-dependent hydrolysis of ester, thioester, amide, peptide and isopeptide bonds formed by the C-terminal Gly of ubiquitin (a 76-residue protein attached to proteins as an intracellular targeting signal).. The catalysed reaction is uridylyl-uridylyl-ribonucleotide-RNA = a 3'-end uridylyl-2',3'-cyclophospho-uridine-RNA + a 5'-end dephospho-ribonucleoside-RNA. Functionally, the replicase polyprotein 1ab is a multifunctional protein: it contains the activities necessary for the transcription of negative stranded RNA, leader RNA, subgenomic mRNAs and progeny virion RNA as well as proteinases responsible for the cleavage of the polyprotein into functional products. Its function is as follows. Nsp1 is essential for viral subgenomic mRNA synthesis. Nsp2 cysteine proteinase which cleaves the nsp2/nsp3 site in the polyprotein. Also displays deubiquitinating and deISGylase activities. The deubiquitinating activity cleaves both ubiquitinated and ISGylated products and may therefore regulate ubiquitin and ISG15 dependent host innate immunity. In terms of biological role, the 3C-like serine proteinase chain is responsible for the majority of cleavages as it cleaves the C-terminus of the polyprotein. Functionally, the helicase chain, which contains a zinc finger structure, displays RNA and DNA duplex-unwinding activities with 5' to 3' polarity. Its function is as follows. Plays a role in viral transcription/replication and prevents the simultaneous activation of host cell dsRNA sensors, such as MDA5/IFIH1, OAS, and PKR. Acts by degrading the 5'-polyuridines generated during replication of the poly(A) region of viral genomic and subgenomic RNAs. Catalyzes a two-step reaction in which a 2'3'-cyclic phosphate (2'3'-cP) is first generated by 2'-O transesterification, which is then hydrolyzed to a 3'-phosphate (3'-P). If not degraded, poly(U) RNA would hybridize with poly(A) RNA tails and activate host dsRNA sensors. In Equidae (horses), this protein is Replicase polyprotein 1ab (rep).